The following is a 152-amino-acid chain: Protein NrdI (152 aa).

The protein belongs to the NrdI family.

Its function is as follows. Probably involved in ribonucleotide reductase function. This is Protein NrdI from Mycolicibacterium vanbaalenii (strain DSM 7251 / JCM 13017 / BCRC 16820 / KCTC 9966 / NRRL B-24157 / PYR-1) (Mycobacterium vanbaalenii).